An 821-amino-acid polypeptide reads, in one-letter code: Zinc finger protein 41 (821 aa).

Residues 1–55 (MAANGDSPPWSPALAAEGRGSSCEVRRERTPEARIHSVKRYPDLSPGPKGRSSAD) form a disordered region. Positions 24–35 (EVRRERTPEARI) are enriched in basic and acidic residues. The 72-residue stretch at 69–140 (VSFEDVTVDF…EGEAPHQSCS (72 aa)) folds into the KRAB domain. A Glycyl lysine isopeptide (Lys-Gly) (interchain with G-Cter in SUMO2) cross-link involves residue lysine 120. The segment at 313-335 (YVCTECVMGFTQKSHLFEHQRIH) adopts a C2H2-type 1 zinc-finger fold. The C2H2-type 2; degenerate zinc finger occupies 341 to 364 (RECDKSNKVFPQKPQVDVHPSVYT). C2H2-type zinc fingers lie at residues 369–391 (YLCT…QKIH), 397–419 (YKCS…LRIH), 425–447 (YECS…QKTH), 453–475 (YECN…QRIH), 481–503 (YVCA…QRIH), 509–531 (YECS…QRIH), 537–559 (YICT…QKTH), 565–587 (YMCA…QKTH), 593–615 (YKCN…QKSH), and 621–643 (YECK…QRIH). Lysine 647 is covalently cross-linked (Glycyl lysine isopeptide (Lys-Gly) (interchain with G-Cter in SUMO2)). 6 C2H2-type zinc fingers span residues 649–671 (YVCP…HRIH), 677–699 (YECS…QKIH), 705–727 (NICA…QKIH), 733–755 (YECG…QKSH), 761–783 (YECS…QIIH), and 789–811 (YACT…QKMH).

This sequence belongs to the krueppel C2H2-type zinc-finger protein family. As to expression, expressed in the heart, brain, placenta, lung, liver, skeletal muscle, kidney and pancreas.

Its subcellular location is the nucleus. Its function is as follows. May be involved in transcriptional regulation. This is Zinc finger protein 41 (ZNF41) from Homo sapiens (Human).